We begin with the raw amino-acid sequence, 397 residues long: Serpin B10 (397 aa).

The Nuclear localization signal signature appears at 74-77 (KKRK).

Belongs to the serpin family. Ov-serpin subfamily.

Its subcellular location is the nucleus. It localises to the cytoplasm. Functionally, protease inhibitor that may play a role in the regulation of protease activities during hematopoiesis and apoptosis induced by TNF. May regulate protease activities in the cytoplasm and in the nucleus. The sequence is that of Serpin B10 (SERPINB10) from Sorex araneus (Eurasian common shrew).